The chain runs to 477 residues: Glycogen synthase (477 aa).

Residue lysine 15 participates in ADP-alpha-D-glucose binding.

This sequence belongs to the glycosyltransferase 1 family. Bacterial/plant glycogen synthase subfamily.

It carries out the reaction [(1-&gt;4)-alpha-D-glucosyl](n) + ADP-alpha-D-glucose = [(1-&gt;4)-alpha-D-glucosyl](n+1) + ADP + H(+). It functions in the pathway glycan biosynthesis; glycogen biosynthesis. Its function is as follows. Synthesizes alpha-1,4-glucan chains using ADP-glucose. This is Glycogen synthase (glgA) from Salmonella typhimurium (strain LT2 / SGSC1412 / ATCC 700720).